Consider the following 429-residue polypeptide: UDP-N-acetylglucosamine 1-carboxyvinyltransferase (429 aa).

22–23 lines the phosphoenolpyruvate pocket; it reads KN. Position 102 (arginine 102) interacts with UDP-N-acetyl-alpha-D-glucosamine. The active-site Proton donor is cysteine 126. Cysteine 126 carries the post-translational modification 2-(S-cysteinyl)pyruvic acid O-phosphothioketal. UDP-N-acetyl-alpha-D-glucosamine contacts are provided by residues 131 to 135, aspartate 316, and isoleucine 338; that span reads RPVDL.

Belongs to the EPSP synthase family. MurA subfamily.

The protein localises to the cytoplasm. The enzyme catalyses phosphoenolpyruvate + UDP-N-acetyl-alpha-D-glucosamine = UDP-N-acetyl-3-O-(1-carboxyvinyl)-alpha-D-glucosamine + phosphate. The protein operates within cell wall biogenesis; peptidoglycan biosynthesis. Cell wall formation. Adds enolpyruvyl to UDP-N-acetylglucosamine. The chain is UDP-N-acetylglucosamine 1-carboxyvinyltransferase from Nitrobacter winogradskyi (strain ATCC 25391 / DSM 10237 / CIP 104748 / NCIMB 11846 / Nb-255).